The primary structure comprises 310 residues: Pantothenate kinase (310 aa).

Position 95-102 (95-102) interacts with ATP; it reads GSVAVGKS.

The protein belongs to the prokaryotic pantothenate kinase family.

The protein localises to the cytoplasm. It carries out the reaction (R)-pantothenate + ATP = (R)-4'-phosphopantothenate + ADP + H(+). The protein operates within cofactor biosynthesis; coenzyme A biosynthesis; CoA from (R)-pantothenate: step 1/5. The protein is Pantothenate kinase of Mycobacteroides abscessus (strain ATCC 19977 / DSM 44196 / CCUG 20993 / CIP 104536 / JCM 13569 / NCTC 13031 / TMC 1543 / L948) (Mycobacterium abscessus).